A 415-amino-acid polypeptide reads, in one-letter code: Phosphoglycerate kinase (415 aa).

Substrate-binding positions include 28–30, R44, 67–70, R124, and R164; these read DLN and HQGR. Residues E336 and 362–365 each bind ATP; that span reads GGHF.

Belongs to the phosphoglycerate kinase family.

The protein localises to the cytoplasm. The catalysed reaction is (2R)-3-phosphoglycerate + ATP = (2R)-3-phospho-glyceroyl phosphate + ADP. It functions in the pathway carbohydrate degradation; glycolysis; pyruvate from D-glyceraldehyde 3-phosphate: step 2/5. This is Phosphoglycerate kinase (pgk) from Aeropyrum pernix (strain ATCC 700893 / DSM 11879 / JCM 9820 / NBRC 100138 / K1).